We begin with the raw amino-acid sequence, 1826 residues long: Kinesin-like protein KIF13B (1826 aa).

The Kinesin motor domain maps to 5-353 (KVKVAVRIRP…LRYADRAKHI (349 aa)). 103–110 (GQTGSGKS) serves as a coordination point for ATP. Residues 364 to 439 (NARIIRDLRE…ESLGISLQSS (76 aa)) adopt a coiled-coil conformation. The FHA domain maps to 471–535 (TLIGSANSQD…LHHGDRILWG (65 aa)). Residues 546 to 582 (KKKKKAEREDEDQDPSMKNENSSEQLDVDGDSSSEVS) are disordered. Residues 561 to 570 (SMKNENSSEQ) are compositionally biased toward polar residues. Coiled-coil stretches lie at residues 607–710 (MQSI…LDKR), 752–772 (SLEKLDNRLLDMRDLYQEWKE), and 1096–1143 (LNAL…ERNA). At S661 the chain carries Phosphoserine. The disordered stretch occupies residues 1367 to 1420 (EQLTGKGKLSRRSISSPNVNRLSGSRQDLIPSYSLGSNKGRWESQQDVSQTTVS). Polar residues-rich tracts occupy residues 1378–1392 (RSISSPNVNRLSGSR) and 1409–1420 (ESQQDVSQTTVS). S1379 bears the Phosphoserine mark. S1381 bears the Phosphoserine; by MARK2 mark. 2 positions are modified to phosphoserine: S1382 and S1391. A Phosphoserine; by MARK2 modification is found at S1410. A phosphoserine mark is found at S1432, S1438, and S1537. T1545 is subject to Phosphothreonine. Residue S1559 is modified to Phosphoserine. Low complexity predominate over residues 1579–1607 (SDALGPGLDAAAPPGSMPTAPEAEPEAPI). Disordered regions lie at residues 1579-1650 (SDAL…RVRR) and 1662-1698 (MLAGDPGCSPGAEGNAPAPGAGGQALASDSEEADEVP). Positions 1608–1624 (SHPPPPTAVPAEEPPGP) are enriched in pro residues. S1644 carries the post-translational modification Phosphoserine. The span at 1671–1688 (PGAEGNAPAPGAGGQALA) shows a compositional bias: low complexity. Residues 1721 to 1763 (GPADFQEGTWVGVELDLPSGKNDGSIGGKQYFRCNPGYGLLVR) enclose the CAP-Gly domain. S1797 carries the phosphoserine modification.

Belongs to the TRAFAC class myosin-kinesin ATPase superfamily. Kinesin family. Binds to DLG1 and DLG4. Interacts (when phosphorylated at Ser-1381 and Ser-1410) with 14-3-3. Post-translationally, phosphorylated at Ser-1381 and Ser-1410 by MARK2, promoting interaction with 14-3-3 and inhibiting microtubule-dependent accumulation and formation of axons. Ubiquitous.

It localises to the cytoplasm. The protein resides in the cytoskeleton. It is found in the cell projection. The protein localises to the axon. Its function is as follows. Involved in reorganization of the cortical cytoskeleton. Regulates axon formation by promoting the formation of extra axons. May be functionally important for the intracellular trafficking of MAGUKs and associated protein complexes. The protein is Kinesin-like protein KIF13B (KIF13B) of Homo sapiens (Human).